Here is a 174-residue protein sequence, read N- to C-terminus: 3-hydroxydecanoyl-[acyl-carrier-protein] dehydratase (174 aa).

His-73 is a catalytic residue.

This sequence belongs to the thioester dehydratase family. FabA subfamily. In terms of assembly, homodimer.

Its subcellular location is the cytoplasm. The catalysed reaction is a (3R)-hydroxyacyl-[ACP] = a (2E)-enoyl-[ACP] + H2O. The enzyme catalyses (3R)-hydroxydecanoyl-[ACP] = (2E)-decenoyl-[ACP] + H2O. It catalyses the reaction (2E)-decenoyl-[ACP] = (3Z)-decenoyl-[ACP]. The protein operates within lipid metabolism; fatty acid biosynthesis. In terms of biological role, necessary for the introduction of cis unsaturation into fatty acids. Catalyzes the dehydration of (3R)-3-hydroxydecanoyl-ACP to E-(2)-decenoyl-ACP and then its isomerization to Z-(3)-decenoyl-ACP. Can catalyze the dehydratase reaction for beta-hydroxyacyl-ACPs with saturated chain lengths up to 16:0, being most active on intermediate chain length. This chain is 3-hydroxydecanoyl-[acyl-carrier-protein] dehydratase, found in Cellvibrio japonicus (strain Ueda107) (Pseudomonas fluorescens subsp. cellulosa).